The primary structure comprises 112 residues: Evasin P1095 (112 aa).

An N-terminal signal peptide occupies residues 1–23 (MELNAFTILQIAVFIAVGYHANT). 3 disulfide bridges follow: Cys-48-Cys-66, Cys-52-Cys-68, and Cys-62-Cys-79. Residue Asn-51 is glycosylated (N-linked (GlcNAc...) asparagine). The disordered stretch occupies residues 89–112 (GDPNDDPKINEATPQTQIFEKKRK).

Its subcellular location is the secreted. In terms of biological role, salivary chemokine-binding protein which binds to host chemokine CXCL8. The protein is Evasin P1095 of Ixodes ricinus (Common tick).